The chain runs to 276 residues: Flagellin FljJ (276 aa).

The interval 51-80 (RPGAGDMSGLAREDEPGSGDIDRGRGPRAG) is disordered. The segment covering 61–75 (AREDEPGSGDIDRGR) has biased composition (basic and acidic residues).

This sequence belongs to the bacterial flagellin family. In C.crescentus, the flagellar filament is composed of multiple flagellins of 29 kDa; 27 kDa and 25 kDa.

It is found in the secreted. Its subcellular location is the bacterial flagellum. Its function is as follows. Flagellin is the subunit protein which polymerizes to form the filaments of bacterial flagella. This chain is Flagellin FljJ (fljJ), found in Caulobacter vibrioides (strain ATCC 19089 / CIP 103742 / CB 15) (Caulobacter crescentus).